Here is a 209-residue protein sequence, read N- to C-terminus: Peroxynitrite isomerase 2 (209 aa).

The GXWXGXG motif lies at 56-62; it reads GVWRGEG. Positions 172 and 199 each coordinate heme b.

It belongs to the nitrobindin family. As to quaternary structure, homodimer. The cofactor is heme b.

The catalysed reaction is peroxynitrite = nitrate. The protein operates within nitrogen metabolism. Functionally, heme-binding protein able to scavenge peroxynitrite and to protect free L-tyrosine against peroxynitrite-mediated nitration, by acting as a peroxynitrite isomerase that converts peroxynitrite to nitrate. Therefore, this protein likely plays a role in peroxynitrite sensing and in the detoxification of reactive nitrogen and oxygen species (RNS and ROS, respectively). Is able to bind nitric oxide (NO) in vitro, but may act as a sensor of peroxynitrite levels in vivo. The chain is Peroxynitrite isomerase 2 from Mycolicibacterium gilvum (strain PYR-GCK) (Mycobacterium gilvum (strain PYR-GCK)).